We begin with the raw amino-acid sequence, 94 residues long: uncharacterized protein (94 aa).

This is an uncharacterized protein from Saccharolobus islandicus (Sulfolobus islandicus).